Reading from the N-terminus, the 305-residue chain is Glycine--tRNA ligase alpha subunit (305 aa).

Belongs to the class-II aminoacyl-tRNA synthetase family. As to quaternary structure, tetramer of two alpha and two beta subunits.

Its subcellular location is the cytoplasm. The catalysed reaction is tRNA(Gly) + glycine + ATP = glycyl-tRNA(Gly) + AMP + diphosphate. This Vibrio cholerae serotype O1 (strain ATCC 39315 / El Tor Inaba N16961) protein is Glycine--tRNA ligase alpha subunit (glyQ).